Consider the following 178-residue polypeptide: Meiotically up-regulated gene 95 protein (178 aa).

Topologically, residues 1-12 (MNLFVYIAQNPT) are cytoplasmic. Residues 13-30 (LTKWFFCCVCTILTMPFF) traverse the membrane as a helical; Signal-anchor for type II membrane protein segment. The Lumenal portion of the chain corresponds to 31 to 178 (KKPYRKRGIS…ESIEKPENDN (148 aa)).

It is found in the endoplasmic reticulum membrane. Its function is as follows. Has a role in meiosis. The polypeptide is Meiotically up-regulated gene 95 protein (mug95) (Schizosaccharomyces pombe (strain 972 / ATCC 24843) (Fission yeast)).